The chain runs to 292 residues: Phosphoribosylaminoimidazole-succinocarboxamide synthase (292 aa).

Belongs to the SAICAR synthetase family.

It carries out the reaction 5-amino-1-(5-phospho-D-ribosyl)imidazole-4-carboxylate + L-aspartate + ATP = (2S)-2-[5-amino-1-(5-phospho-beta-D-ribosyl)imidazole-4-carboxamido]succinate + ADP + phosphate + 2 H(+). It functions in the pathway purine metabolism; IMP biosynthesis via de novo pathway; 5-amino-1-(5-phospho-D-ribosyl)imidazole-4-carboxamide from 5-amino-1-(5-phospho-D-ribosyl)imidazole-4-carboxylate: step 1/2. This chain is Phosphoribosylaminoimidazole-succinocarboxamide synthase, found in Elusimicrobium minutum (strain Pei191).